The chain runs to 300 residues: uncharacterized protein (300 aa).

The protein belongs to the histone deacetylase family.

Functionally, putative deacetylase. This is an uncharacterized protein from Picosynechococcus sp. (strain ATCC 27264 / PCC 7002 / PR-6) (Agmenellum quadruplicatum).